The sequence spans 155 residues: SsrA-binding protein (155 aa).

The disordered stretch occupies residues 135–155 (KRESLKRRQDQRDIQRAMKNY).

The protein belongs to the SmpB family.

Its subcellular location is the cytoplasm. Functionally, required for rescue of stalled ribosomes mediated by trans-translation. Binds to transfer-messenger RNA (tmRNA), required for stable association of tmRNA with ribosomes. tmRNA and SmpB together mimic tRNA shape, replacing the anticodon stem-loop with SmpB. tmRNA is encoded by the ssrA gene; the 2 termini fold to resemble tRNA(Ala) and it encodes a 'tag peptide', a short internal open reading frame. During trans-translation Ala-aminoacylated tmRNA acts like a tRNA, entering the A-site of stalled ribosomes, displacing the stalled mRNA. The ribosome then switches to translate the ORF on the tmRNA; the nascent peptide is terminated with the 'tag peptide' encoded by the tmRNA and targeted for degradation. The ribosome is freed to recommence translation, which seems to be the essential function of trans-translation. The sequence is that of SsrA-binding protein from Trichormus variabilis (strain ATCC 29413 / PCC 7937) (Anabaena variabilis).